The sequence spans 166 residues: NAD(P)H-quinone oxidoreductase subunit I, chloroplastic (166 aa).

4Fe-4S ferredoxin-type domains are found at residues 55–84 (GRIH…VDWK) and 95–124 (LNYS…MTEE). Residues Cys-64, Cys-67, Cys-70, Cys-74, Cys-104, Cys-107, Cys-110, and Cys-114 each contribute to the [4Fe-4S] cluster site.

This sequence belongs to the complex I 23 kDa subunit family. As to quaternary structure, NDH is composed of at least 16 different subunits, 5 of which are encoded in the nucleus. [4Fe-4S] cluster is required as a cofactor.

It is found in the plastid. The protein resides in the chloroplast thylakoid membrane. It carries out the reaction a plastoquinone + NADH + (n+1) H(+)(in) = a plastoquinol + NAD(+) + n H(+)(out). The enzyme catalyses a plastoquinone + NADPH + (n+1) H(+)(in) = a plastoquinol + NADP(+) + n H(+)(out). Functionally, NDH shuttles electrons from NAD(P)H:plastoquinone, via FMN and iron-sulfur (Fe-S) centers, to quinones in the photosynthetic chain and possibly in a chloroplast respiratory chain. The immediate electron acceptor for the enzyme in this species is believed to be plastoquinone. Couples the redox reaction to proton translocation, and thus conserves the redox energy in a proton gradient. The polypeptide is NAD(P)H-quinone oxidoreductase subunit I, chloroplastic (Raillardella argentea (Silky raillardella)).